The following is a 239-amino-acid chain: Sensory rhodopsin-1 (239 aa).

At 1–3 the chain is on the extracellular side; the sequence is MDA. Residues 4–25 traverse the membrane as a helical segment; the sequence is VATAYLGGAVALIVGVAFVWLL. Topologically, residues 26-34 are cytoplasmic; the sequence is YRSLDGSPH. Residues 35-56 traverse the membrane as a helical segment; sequence QSALAPLAIIPVFAGLSYVGMA. The Extracellular segment spans residues 57-70; the sequence is YDIGTVIVNGNQIV. A helical membrane pass occupies residues 71–92; that stretch reads GLRYIDWLVTTPILVGYVGYAA. The Cytoplasmic portion of the chain corresponds to 93-95; the sequence is GAS. A helical membrane pass occupies residues 96-118; sequence RRSIIGVMVADALMIAVGAGAVV. At 119–122 the chain is on the extracellular side; it reads TDGT. The helical transmembrane segment at 123–150 threads the bilayer; the sequence is LKWALFGVSSIFHLSLFAYLYVIFPRVV. Topologically, residues 151–153 are cytoplasmic; that stretch reads PDV. Residues 154-181 traverse the membrane as a helical segment; sequence PEQIGLFNLLKNHIGLLWLAYPLVWLFG. Topologically, residues 182–189 are extracellular; that stretch reads PAGIGEAT. A helical transmembrane segment spans residues 190–222; sequence AAGVALTYVFLDVLAKVPYVYFFYARRRVFMHS. Lysine 205 is subject to N6-(retinylidene)lysine. The Cytoplasmic portion of the chain corresponds to 223-239; sequence ESPPAPEQATVEATAAD.

The protein belongs to the archaeal/bacterial/fungal opsin family. In terms of assembly, interacts with HTR-I.

The protein resides in the cell membrane. Its function is as follows. Involved in the control of phototaxis. Mediates both photoattractant (in the orange light) and photophobic (in the near UV light) responses. The signal is then transmitted to the sensory rhodopsin I transducer (HTR-I). In Halobacterium salinarum (strain ATCC 29341 / DSM 671 / R1), this protein is Sensory rhodopsin-1 (sopI).